Here is a 262-residue protein sequence, read N- to C-terminus: MTQHFLLFDIGNTNVKIGIAVETAVLTSYVLPTDPGQTTDSIGLRLLEVLRHAGLGPADVGACVASSVVPGVNPLIRRACERYLYRKLLFAPGDIAIPLDNRYERPAEVGADRLVAAYAARRLYPGPRSLVSVDFGTATTFDCVEGGAYLGGLICPGVLSSAGALSSRTAKLPRISLEVEEDSPVIGRSTTTSLNHGFIFGFAAMTEGVLARLNGVLPGPTEVVATGGFARDIARVSSCFDHVRPDLLLQGLRLLYLERDAR.

9 to 16 (DIGNTNVK) contributes to the ATP binding site. Substrate contacts are provided by residues Tyr103 and 110–113 (GADR). Asp112 (proton acceptor) is an active-site residue. Residue Asp134 coordinates K(+). Residue Thr137 coordinates ATP. Thr190 contributes to the substrate binding site.

The protein belongs to the type III pantothenate kinase family. Homodimer. NH4(+) serves as cofactor. K(+) is required as a cofactor.

It is found in the cytoplasm. The catalysed reaction is (R)-pantothenate + ATP = (R)-4'-phosphopantothenate + ADP + H(+). It participates in cofactor biosynthesis; coenzyme A biosynthesis; CoA from (R)-pantothenate: step 1/5. Its function is as follows. Catalyzes the phosphorylation of pantothenate (Pan), the first step in CoA biosynthesis. The chain is Type III pantothenate kinase from Nitratidesulfovibrio vulgaris (strain DSM 19637 / Miyazaki F) (Desulfovibrio vulgaris).